Reading from the N-terminus, the 340-residue chain is GTP 3',8-cyclase (340 aa).

The Radical SAM core domain maps to 8-229 (KLGRPIRDLR…IEQHFEISPV (222 aa)). Arg-17 contacts GTP. [4Fe-4S] cluster contacts are provided by Cys-24 and Cys-28. Tyr-30 contributes to the S-adenosyl-L-methionine binding site. Cys-31 is a [4Fe-4S] cluster binding site. Arg-71 lines the GTP pocket. Residue Gly-75 coordinates S-adenosyl-L-methionine. Thr-102 provides a ligand contact to GTP. Ser-126 is a binding site for S-adenosyl-L-methionine. A GTP-binding site is contributed by Lys-163. Residue Met-197 participates in S-adenosyl-L-methionine binding. Cys-261 and Cys-264 together coordinate [4Fe-4S] cluster. 266-268 (RAR) contributes to the GTP binding site. Cys-278 is a binding site for [4Fe-4S] cluster.

Belongs to the radical SAM superfamily. MoaA family. In terms of assembly, monomer and homodimer. It depends on [4Fe-4S] cluster as a cofactor.

The catalysed reaction is GTP + AH2 + S-adenosyl-L-methionine = (8S)-3',8-cyclo-7,8-dihydroguanosine 5'-triphosphate + 5'-deoxyadenosine + L-methionine + A + H(+). It participates in cofactor biosynthesis; molybdopterin biosynthesis. Functionally, catalyzes the cyclization of GTP to (8S)-3',8-cyclo-7,8-dihydroguanosine 5'-triphosphate. This Staphylococcus epidermidis (strain ATCC 35984 / DSM 28319 / BCRC 17069 / CCUG 31568 / BM 3577 / RP62A) protein is GTP 3',8-cyclase.